Here is a 124-residue protein sequence, read N- to C-terminus: Small ribosomal subunit protein uS12c (124 aa).

Disordered stretches follow at residues Met-1–Pro-28 and Ala-104–Thr-124. Composition is skewed to basic residues over residues Glu-11 to Lys-20 and Asp-109 to Thr-124.

Belongs to the universal ribosomal protein uS12 family. In terms of assembly, part of the 30S ribosomal subunit.

Its subcellular location is the plastid. The protein localises to the chloroplast. Functionally, with S4 and S5 plays an important role in translational accuracy. Located at the interface of the 30S and 50S subunits. The chain is Small ribosomal subunit protein uS12c (rps12) from Gracilaria tenuistipitata var. liui (Red alga).